Here is a 447-residue protein sequence, read N- to C-terminus: ATP-dependent protease ATPase subunit HslU (447 aa).

Residues isoleucine 17 and glycine 59–glutamate 64 contribute to the ATP site. A disordered region spans residues proline 136–threonine 160. The span at alanine 148–alanine 159 shows a compositional bias: basic and acidic residues. Positions 260, 325, and 397 each coordinate ATP.

It belongs to the ClpX chaperone family. HslU subfamily. A double ring-shaped homohexamer of HslV is capped on each side by a ring-shaped HslU homohexamer. The assembly of the HslU/HslV complex is dependent on binding of ATP.

The protein localises to the cytoplasm. ATPase subunit of a proteasome-like degradation complex; this subunit has chaperone activity. The binding of ATP and its subsequent hydrolysis by HslU are essential for unfolding of protein substrates subsequently hydrolyzed by HslV. HslU recognizes the N-terminal part of its protein substrates and unfolds these before they are guided to HslV for hydrolysis. The protein is ATP-dependent protease ATPase subunit HslU of Coxiella burnetii (strain Dugway 5J108-111).